We begin with the raw amino-acid sequence, 510 residues long: Ninja-family protein mc410 (510 aa).

3 disordered regions span residues 1-179 (MDEN…RQIL), 323-414 (HPSH…PSEF), and 481-510 (RHAS…SAQS). Composition is skewed to basic and acidic residues over residues 31-44 (SKVE…KVIN) and 103-146 (RPVE…DKTR). Positions 148-160 (SHISITTDEGSTA) are enriched in polar residues. Composition is skewed to basic and acidic residues over residues 363–389 (RAME…EENV) and 397–406 (RAKDPPDQPR). Over residues 485–496 (VEQTSQEPGTGV) the composition is skewed to polar residues. Residues 497 to 510 (SSFPSSNPAASAQS) show a composition bias toward low complexity.

This sequence belongs to the Ninja family.

The protein localises to the nucleus. In Nicotiana tabacum (Common tobacco), this protein is Ninja-family protein mc410 (MC410).